Consider the following 1111-residue polypeptide: MSEILTDDQVANLIALLRADVSIDTKVQQVTVVKSSIKQHMVPESCIVPVFEALHLASSSQHALLVNAGFTALNHLFTRLVRQDPRSLTKEGTRALPLIVEKLGDQKEKFRQLASQALATLYKVAPVEVERSVRNIAMVGKNARAKEASLHWLLQMHQEQGLQFRAYVPTMMELLEDADGMVRDVAKSTVIELFRNAPGPAKSDLKKQLKNFKVRPAIEQAIVKELNPTSSAPASQPDPESVEPSYVNTTRELDEIFREMHGYFEGKETEQNWLKREESVTKLRRLIAGNAATDFHDQFLTGLRALLDGIIKAVVSLRTSLSKEGCSLIQEIAKAYGPAMDPMVEILMQTFIKLTAATKKIASAQANTTVDTIISKVTYNNRIMQHVWLACQDKNVQPRLYASGWLRTLLAKEAHHKNHVEHTGGLDLIEKCIKKGLSDANPGVREKMRATYWMFAGVWPAKAEAIMNGLDSTAARLLQNDPNNPKSPKKPEGGARPGLGLSKSTMGTSKPSVREAMMAQKRAMTTKTVPTRPGSAMSHFSPAKSVSSLSQPPPAAPTVRARPESAMLGSTGGISGAPMRPGRRKVETARPATAGPYSVRSHDQPSAEQTSPPSRPKPKAVTPKSITSSPKRTAPKMARSATVSGEPQLPTPTRAGSPKVMGSPRATPSRSVPPTVAPPSSSPSKRHEDFSLVVPIMTSSASPPREEQRFVKPVEDEDMDMSPSDTPSKPGQHSPDAPASPPQTVAAVDEEPISITTPLRSVEVAVPSPPSASRSLEVYEDPLTREQLTTPKLIFGPVLEDRSVNEDAAILQQAVRQQQEQQQQQQQQNGAANGMALSPEKLKQNQRLLDSGISKVQQRSLDVHGFRKLQGIIRDSDTKPTTGTALLTDDKFDALVAGLFDFLESPLTNLAPEKTQDVKAQVLATIKLLLKRTRASFQPHVSRGLESLLRARAVYEGRTHIVSGLELLAADLAGLGDASEIVLVLCRMLSDLDVDSAAHAAAGGVGGGAGRSLSMGLHVLREMLDARGAAFVPSDAELAALAALAGGCLESLESAVRMDAVLLCVALHARVGDARFWEALKGVKEDPKSLITYYIVKRQREVGAAGVGQAA.

2 HEAT repeats span residues 95–133 and 167–205; these read ALPL…ERSV and YVPT…KSDL. Disordered stretches follow at residues 225-245 and 476-751; these read ELNP…VEPS and RLLQ…VDEE. Over residues 502–511 the composition is skewed to polar residues; the sequence is SKSTMGTSKP. Residues 704 to 714 are compositionally biased toward basic and acidic residues; the sequence is PREEQRFVKPV.

It belongs to the CLASP family. As to quaternary structure, interacts with microtubules.

The protein resides in the cytoplasm. It localises to the cytoskeleton. It is found in the nucleus. The protein localises to the spindle. Functionally, microtubule binding protein that promotes the stabilization of dynamic microtubules. Required for mitotic spindle formation. In Chaetomium globosum (strain ATCC 6205 / CBS 148.51 / DSM 1962 / NBRC 6347 / NRRL 1970) (Soil fungus), this protein is Protein STU1 (STU1).